The chain runs to 128 residues: Small ribosomal subunit protein uS12 (128 aa).

Residues 1–24 (MPTFNQLVKYGREKRKKKSKAPAL) form a disordered region. The residue at position 89 (aspartate 89) is a 3-methylthioaspartic acid. Positions 105 to 128 (AGVEGRRQSRSKYGTKRPKEEKGG) are disordered.

This sequence belongs to the universal ribosomal protein uS12 family. As to quaternary structure, part of the 30S ribosomal subunit. Contacts proteins S8 and S17. May interact with IF1 in the 30S initiation complex.

Its function is as follows. With S4 and S5 plays an important role in translational accuracy. In terms of biological role, interacts with and stabilizes bases of the 16S rRNA that are involved in tRNA selection in the A site and with the mRNA backbone. Located at the interface of the 30S and 50S subunits, it traverses the body of the 30S subunit contacting proteins on the other side and probably holding the rRNA structure together. The combined cluster of proteins S8, S12 and S17 appears to hold together the shoulder and platform of the 30S subunit. This chain is Small ribosomal subunit protein uS12, found in Aquifex aeolicus (strain VF5).